The following is a 432-amino-acid chain: Homogentisate 1,2-dioxygenase (432 aa).

His286 serves as the catalytic Proton acceptor. The Fe cation site is built by His329 and Glu335. Tyr344 and His365 together coordinate homogentisate. His365 is a Fe cation binding site.

This sequence belongs to the homogentisate dioxygenase family. In terms of assembly, hexamer; dimer of trimers. The cofactor is Fe cation.

It catalyses the reaction homogentisate + O2 = 4-maleylacetoacetate + H(+). The protein operates within amino-acid degradation; L-phenylalanine degradation; acetoacetate and fumarate from L-phenylalanine: step 4/6. Involved in the catabolism of homogentisate (2,5-dihydroxyphenylacetate or 2,5-OH-PhAc), a central intermediate in the degradation of phenylalanine and tyrosine. Catalyzes the oxidative ring cleavage of the aromatic ring of homogentisate to yield maleylacetoacetate. This chain is Homogentisate 1,2-dioxygenase, found in Bordetella petrii (strain ATCC BAA-461 / DSM 12804 / CCUG 43448).